Reading from the N-terminus, the 347-residue chain is tRNA pseudouridine synthase D (347 aa).

Asp81 (nucleophile) is an active-site residue. The region spanning 158–305 (GVPNYFGSQR…RHDRREIALK (148 aa)) is the TRUD domain.

This sequence belongs to the pseudouridine synthase TruD family.

It carries out the reaction uridine(13) in tRNA = pseudouridine(13) in tRNA. Its function is as follows. Responsible for synthesis of pseudouridine from uracil-13 in transfer RNAs. In Vibrio parahaemolyticus serotype O3:K6 (strain RIMD 2210633), this protein is tRNA pseudouridine synthase D.